Here is a 488-residue protein sequence, read N- to C-terminus: Probable glycine dehydrogenase (decarboxylating) subunit 2 (488 aa).

Residue Lys-264 is modified to N6-(pyridoxal phosphate)lysine.

The protein belongs to the GcvP family. C-terminal subunit subfamily. The glycine cleavage system is composed of four proteins: P, T, L and H. In this organism, the P 'protein' is a heterodimer of two subunits. It depends on pyridoxal 5'-phosphate as a cofactor.

The enzyme catalyses N(6)-[(R)-lipoyl]-L-lysyl-[glycine-cleavage complex H protein] + glycine + H(+) = N(6)-[(R)-S(8)-aminomethyldihydrolipoyl]-L-lysyl-[glycine-cleavage complex H protein] + CO2. Its function is as follows. The glycine cleavage system catalyzes the degradation of glycine. The P protein binds the alpha-amino group of glycine through its pyridoxal phosphate cofactor; CO(2) is released and the remaining methylamine moiety is then transferred to the lipoamide cofactor of the H protein. The polypeptide is Probable glycine dehydrogenase (decarboxylating) subunit 2 (Methylococcus capsulatus (strain ATCC 33009 / NCIMB 11132 / Bath)).